Reading from the N-terminus, the 163-residue chain is Small heat shock protein C1 (163 aa).

One can recognise a sHSP domain in the interval 55-163 (MFYESSSIKS…EQDAKEITIN (109 aa)).

The protein belongs to the small heat shock protein (HSP20) family.

The protein is Small heat shock protein C1 (hspC1) of Rickettsia typhi (strain ATCC VR-144 / Wilmington).